We begin with the raw amino-acid sequence, 290 residues long: Thymidylate synthase (290 aa).

Arg31 provides a ligand contact to dUMP. His61 lines the (6R)-5,10-methylene-5,6,7,8-tetrahydrofolate pocket. Residue 152 to 153 participates in dUMP binding; sequence RR. Cys172 serves as the catalytic Nucleophile. DUMP contacts are provided by residues 192–195, Asn203, and 233–235; these read RSAD and HIY. Asp195 is a binding site for (6R)-5,10-methylene-5,6,7,8-tetrahydrofolate. Ala289 serves as a coordination point for (6R)-5,10-methylene-5,6,7,8-tetrahydrofolate.

Belongs to the thymidylate synthase family. Bacterial-type ThyA subfamily. In terms of assembly, homodimer.

Its subcellular location is the cytoplasm. It carries out the reaction dUMP + (6R)-5,10-methylene-5,6,7,8-tetrahydrofolate = 7,8-dihydrofolate + dTMP. It participates in pyrimidine metabolism; dTTP biosynthesis. In terms of biological role, catalyzes the reductive methylation of 2'-deoxyuridine-5'-monophosphate (dUMP) to 2'-deoxythymidine-5'-monophosphate (dTMP) while utilizing 5,10-methylenetetrahydrofolate (mTHF) as the methyl donor and reductant in the reaction, yielding dihydrofolate (DHF) as a by-product. This enzymatic reaction provides an intracellular de novo source of dTMP, an essential precursor for DNA biosynthesis. The protein is Thymidylate synthase of Psychrobacter cryohalolentis (strain ATCC BAA-1226 / DSM 17306 / VKM B-2378 / K5).